A 398-amino-acid chain; its full sequence is Peptidyl-prolyl cis-trans isomerase D (398 aa).

Residues 21–185 enclose the PPIase cyclophilin-type domain; that stretch reads FGSSPASRPG…EDVKIVDCGE (165 aa). TPR repeat units lie at residues 229 to 262, 282 to 323, and 335 to 368; these read GLAL…LQLH, TSIQ…PSTE, and AKAF…APED.

The protein belongs to the cyclophilin-type PPIase family. PPIase D subfamily.

It is found in the cytoplasm. It catalyses the reaction [protein]-peptidylproline (omega=180) = [protein]-peptidylproline (omega=0). Functionally, PPIases accelerate the folding of proteins. It catalyzes the cis-trans isomerization of proline imidic peptide bonds in oligopeptides. This chain is Peptidyl-prolyl cis-trans isomerase D (CPR6), found in Mycosarcoma maydis (Corn smut fungus).